The following is a 191-amino-acid chain: Phospholipase A2-delta (191 aa).

The first 25 residues, 1–25 (MIRGGALTHVALGLTVFLLLAVVHS), serve as a signal peptide directing secretion. 6 disulfides stabilise this stretch: Cys29–Cys56, Cys33–Cys62, Cys38–Cys115, Cys49–Cys69, Cys68–Cys93, and Cys75–Cys86. Ca(2+) is bound by residues Tyr48, Gly50, and Tyr53. The active site involves His72. Asp73 provides a ligand contact to Ca(2+). Residues 161–191 (KADTKDGLGTNQGPQTKDGSKVSVPMNPSPS) form a disordered region.

It belongs to the phospholipase A2 family. Requires Ca(2+) as cofactor. Specifically expressed in flowers but at a low level. Detected specifically in the pollen.

It is found in the secreted. The protein localises to the endoplasmic reticulum. It carries out the reaction a 1,2-diacyl-sn-glycero-3-phosphocholine + H2O = a 1-acyl-sn-glycero-3-phosphocholine + a fatty acid + H(+). In terms of biological role, PA2 catalyzes the calcium-dependent hydrolysis of the 2-acyl groups in 3-sn-phosphoglycerides. Releases lysophospholipids (LPLs) and free fatty acids (FFAs) from membrane phospholipids in response to hormones and other external stimuli. Plays a role in pollen development and germination and tube growth. This Arabidopsis thaliana (Mouse-ear cress) protein is Phospholipase A2-delta (PLA2-DELTA).